The primary structure comprises 539 residues: Chaperonin GroEL 1 (539 aa).

ATP-binding positions include 29–32, 86–90, Gly413, 478–480, and Asp494; these read TLGP, DGTTT, and NAA.

It belongs to the chaperonin (HSP60) family. As to quaternary structure, forms a cylinder of 14 subunits composed of two heptameric rings stacked back-to-back. Interacts with the co-chaperonin GroES.

It localises to the cytoplasm. The enzyme catalyses ATP + H2O + a folded polypeptide = ADP + phosphate + an unfolded polypeptide.. Functionally, together with its co-chaperonin GroES, plays an essential role in assisting protein folding. The GroEL-GroES system forms a nano-cage that allows encapsulation of the non-native substrate proteins and provides a physical environment optimized to promote and accelerate protein folding. The protein is Chaperonin GroEL 1 of Corynebacterium diphtheriae (strain ATCC 700971 / NCTC 13129 / Biotype gravis).